We begin with the raw amino-acid sequence, 225 residues long: Enolase-phosphatase E1 (225 aa).

This sequence belongs to the HAD-like hydrolase superfamily. MasA/MtnC family. Monomer. Mg(2+) serves as cofactor.

It carries out the reaction 5-methylsulfanyl-2,3-dioxopentyl phosphate + H2O = 1,2-dihydroxy-5-(methylsulfanyl)pent-1-en-3-one + phosphate. It functions in the pathway amino-acid biosynthesis; L-methionine biosynthesis via salvage pathway; L-methionine from S-methyl-5-thio-alpha-D-ribose 1-phosphate: step 3/6. Its pathway is amino-acid biosynthesis; L-methionine biosynthesis via salvage pathway; L-methionine from S-methyl-5-thio-alpha-D-ribose 1-phosphate: step 4/6. In terms of biological role, bifunctional enzyme that catalyzes the enolization of 2,3-diketo-5-methylthiopentyl-1-phosphate (DK-MTP-1-P) into the intermediate 2-hydroxy-3-keto-5-methylthiopentenyl-1-phosphate (HK-MTPenyl-1-P), which is then dephosphorylated to form the acireductone 1,2-dihydroxy-3-keto-5-methylthiopentene (DHK-MTPene). In Pseudomonas aeruginosa (strain UCBPP-PA14), this protein is Enolase-phosphatase E1.